The chain runs to 265 residues: ATP synthase subunit a (265 aa).

Helical transmembrane passes span 25-45 (FWAV…LFLW), 88-108 (IAPL…MDLI), 142-162 (DLNT…IYSI), 207-227 (LFGN…IGFW), and 233-253 (FAWA…FMML).

The protein belongs to the ATPase A chain family. As to quaternary structure, F-type ATPases have 2 components, CF(1) - the catalytic core - and CF(0) - the membrane proton channel. CF(1) has five subunits: alpha(3), beta(3), gamma(1), delta(1), epsilon(1). CF(0) has three main subunits: a(1), b(2) and c(9-12). The alpha and beta chains form an alternating ring which encloses part of the gamma chain. CF(1) is attached to CF(0) by a central stalk formed by the gamma and epsilon chains, while a peripheral stalk is formed by the delta and b chains.

It localises to the cell inner membrane. Functionally, key component of the proton channel; it plays a direct role in the translocation of protons across the membrane. This is ATP synthase subunit a from Idiomarina loihiensis (strain ATCC BAA-735 / DSM 15497 / L2-TR).